We begin with the raw amino-acid sequence, 527 residues long: Peptide chain release factor 3 (527 aa).

The tr-type G domain maps to 9–277 (AKRRTFAIIS…CIVDWAPQPL (269 aa)). GTP contacts are provided by residues 18-25 (SHPDAGKT), 86-90 (DTPGH), and 140-143 (NKLD).

Belongs to the TRAFAC class translation factor GTPase superfamily. Classic translation factor GTPase family. PrfC subfamily.

It localises to the cytoplasm. Functionally, increases the formation of ribosomal termination complexes and stimulates activities of RF-1 and RF-2. It binds guanine nucleotides and has strong preference for UGA stop codons. It may interact directly with the ribosome. The stimulation of RF-1 and RF-2 is significantly reduced by GTP and GDP, but not by GMP. This is Peptide chain release factor 3 from Pseudomonas aeruginosa (strain LESB58).